A 107-amino-acid chain; its full sequence is Putative pterin-4-alpha-carbinolamine dehydratase (107 aa).

Belongs to the pterin-4-alpha-carbinolamine dehydratase family.

It catalyses the reaction (4aS,6R)-4a-hydroxy-L-erythro-5,6,7,8-tetrahydrobiopterin = (6R)-L-erythro-6,7-dihydrobiopterin + H2O. The sequence is that of Putative pterin-4-alpha-carbinolamine dehydratase from Rubrobacter xylanophilus (strain DSM 9941 / JCM 11954 / NBRC 16129 / PRD-1).